The primary structure comprises 529 residues: MQQRRPVRRALLSVSDKAGIVEFAQALSARGVELLSTGGTARLLAEKGLPVTEVSDYTGFPEMMDGRVKTLHPKVHGGILGRRGQDDAIMEEHQIQPIDMVVVNLYPFAQTVAREGCSLEDAVENIDIGGPTMVRSAAKNHKDVAIVVKSSDYDAIIKEMDDNEGSLTLATRFDLAIKAFEHTAAYDSMIANYFGSMVPAYHGESKEAAGRFPRTLNLNFIKKQDMRYGENSHQQAAFYIEENVKEASVATATQVQGKALSYNNIADTDAALECVKEFAEPACVIVKHANPCGVAIGNSILDAYDRAYKTDPTSAFGGIIAFNRELDAESAQAIISRQFVEVIIAPSASEEALKITAAKQNVRVLTCGQWGERVPGLDFKRVNGGLLVQDRDLGMVGAEELRVVTQRQPTEQELRDALFCWKVAKFVKSNAIVYAKNNMTIGIGAGQMSRVYSAKIAGIKAADEGLEVKGSSMASDAFFPFRDGIDAAAAAGVTCVIQPGGSIRDDEVIAAADEHGIAMLFTDMRHFRH.

In terms of domain architecture, MGS-like spans 1-148; sequence MQQRRPVRRA…KNHKDVAIVV (148 aa). Lysine 287 carries the post-translational modification N6-acetyllysine.

It belongs to the PurH family.

The enzyme catalyses (6R)-10-formyltetrahydrofolate + 5-amino-1-(5-phospho-beta-D-ribosyl)imidazole-4-carboxamide = 5-formamido-1-(5-phospho-D-ribosyl)imidazole-4-carboxamide + (6S)-5,6,7,8-tetrahydrofolate. It catalyses the reaction IMP + H2O = 5-formamido-1-(5-phospho-D-ribosyl)imidazole-4-carboxamide. It functions in the pathway purine metabolism; IMP biosynthesis via de novo pathway; 5-formamido-1-(5-phospho-D-ribosyl)imidazole-4-carboxamide from 5-amino-1-(5-phospho-D-ribosyl)imidazole-4-carboxamide (10-formyl THF route): step 1/1. It participates in purine metabolism; IMP biosynthesis via de novo pathway; IMP from 5-formamido-1-(5-phospho-D-ribosyl)imidazole-4-carboxamide: step 1/1. This Escherichia coli O9:H4 (strain HS) protein is Bifunctional purine biosynthesis protein PurH.